Consider the following 504-residue polypeptide: Cytochrome P450 2D10 (504 aa).

O-linked (GlcNAc) serine glycosylation is present at S382. C446 serves as a coordination point for heme.

This sequence belongs to the cytochrome P450 family. It depends on heme as a cofactor.

The protein localises to the endoplasmic reticulum membrane. Its subcellular location is the microsome membrane. The catalysed reaction is an organic molecule + reduced [NADPH--hemoprotein reductase] + O2 = an alcohol + oxidized [NADPH--hemoprotein reductase] + H2O + H(+). Its function is as follows. Cytochromes P450 are a group of heme-thiolate monooxygenases. In liver microsomes, this enzyme is involved in an NADPH-dependent electron transport pathway. It oxidizes a variety of structurally unrelated compounds, including steroids, fatty acids, and xenobiotics. The sequence is that of Cytochrome P450 2D10 (Cyp2d10) from Rattus norvegicus (Rat).